The sequence spans 201 residues: Glycerol-3-phosphate acyltransferase (201 aa).

The next 4 helical transmembrane spans lie at 4–24 (IASL…LVSL), 84–104 (EIAM…FLAF), 116–136 (VLLA…LAVA), and 157–177 (AWFI…LLLV).

This sequence belongs to the PlsY family. In terms of assembly, probably interacts with PlsX.

It localises to the cell inner membrane. The enzyme catalyses an acyl phosphate + sn-glycerol 3-phosphate = a 1-acyl-sn-glycero-3-phosphate + phosphate. Its pathway is lipid metabolism; phospholipid metabolism. Its function is as follows. Catalyzes the transfer of an acyl group from acyl-phosphate (acyl-PO(4)) to glycerol-3-phosphate (G3P) to form lysophosphatidic acid (LPA). This enzyme utilizes acyl-phosphate as fatty acyl donor, but not acyl-CoA or acyl-ACP. This chain is Glycerol-3-phosphate acyltransferase, found in Laribacter hongkongensis (strain HLHK9).